Consider the following 449-residue polypeptide: Uric acid permease PucJ (449 aa).

A run of 13 helical transmembrane segments spans residues L11–G31, L41–L61, G67–I87, Y91–A111, V119–P139, E158–L178, V191–S211, A229–V249, A277–A297, I313–L333, A334–I354, L372–F392, and I401–F421.

This sequence belongs to the nucleobase:cation symporter-2 (NCS2) (TC 2.A.40) family.

The protein localises to the cell membrane. In terms of biological role, uptake of uric acid. The sequence is that of Uric acid permease PucJ (pucJ) from Bacillus subtilis (strain 168).